Reading from the N-terminus, the 132-residue chain is S-protein homolog 19 (132 aa).

The signal sequence occupies residues 1–26 (MSGSLAFHIIMSVTFMVFFFGGLCEA). N-linked (GlcNAc...) asparagine glycosylation is present at asparagine 87.

This sequence belongs to the plant self-incompatibility (S1) protein family.

It localises to the secreted. This Arabidopsis thaliana (Mouse-ear cress) protein is S-protein homolog 19.